A 198-amino-acid chain; its full sequence is uncharacterized protein (198 aa).

A coiled-coil region spans residues 20–58; it reads ERVRRDEELARLSADKEQAKNDLEESKRRIARLRGTVYE. The interval 144–198 is disordered; it reads LSNRKTKNPESDRRRQSRKKKSTQIQASDEMKHRRHHVHKVHHYSQKQSSSTTRR. The span at 176–188 shows a compositional bias: basic residues; sequence HRRHHVHKVHHYS. The segment covering 189–198 has biased composition (polar residues); the sequence is QKQSSSTTRR.

It localises to the nucleus. The protein localises to the nucleolus. This is an uncharacterized protein from Schizosaccharomyces pombe (strain 972 / ATCC 24843) (Fission yeast).